Reading from the N-terminus, the 363-residue chain is Ribosome-binding ATPase YchF (363 aa).

The region spanning Phe3 to Leu256 is the OBG-type G domain. Position 12–17 (Asn12–Thr17) interacts with ATP. Mg(2+) is bound by residues Ser16 and Thr36. Residues Asn278–Phe361 enclose the TGS domain.

The protein belongs to the TRAFAC class OBG-HflX-like GTPase superfamily. OBG GTPase family. YchF/OLA1 subfamily. The cofactor is Mg(2+).

Functionally, ATPase that binds to both the 70S ribosome and the 50S ribosomal subunit in a nucleotide-independent manner. The polypeptide is Ribosome-binding ATPase YchF (Haemophilus ducreyi (strain 35000HP / ATCC 700724)).